A 20-amino-acid chain; its full sequence is Methyl-coenzyme M reductase subunit gamma (20 aa).

The disordered stretch occupies residues 1–20; sequence AYERQFYPGATSVAENNIGH.

This sequence belongs to the methyl-coenzyme M reductase gamma subunit family. In terms of assembly, MCR from M.thermophila is a heterotrimer composed of an alpha, a beta, and a gamma subunit. It depends on coenzyme F430 as a cofactor.

The protein resides in the cytoplasm. It catalyses the reaction coenzyme B + methyl-coenzyme M = methane + coenzyme M-coenzyme B heterodisulfide. It participates in one-carbon metabolism; methyl-coenzyme M reduction; methane from methyl-coenzyme M: step 1/1. Component of the methyl-coenzyme M reductase (MCR) I that catalyzes the reductive cleavage of methyl-coenzyme M (CoM-S-CH3 or 2-(methylthio)ethanesulfonate) using coenzyme B (CoB or 7-mercaptoheptanoylthreonine phosphate) as reductant which results in the production of methane and the mixed heterodisulfide of CoB and CoM (CoM-S-S-CoB). This is the final step in methanogenesis. The sequence is that of Methyl-coenzyme M reductase subunit gamma from Methanosarcina thermophila.